A 391-amino-acid chain; its full sequence is MKKVLFPCQICGQNSHGTHFGIVSCRACAAFFRRSVNSKWARKGCLTNFKDKGSCFCKPCRLRKCVEIGMDASKFQYDRDAISAIKHPKIFPSVSYYVGRPEFLMFSDSNVTSQKTFIDVQNLVFEVSRYLDHGCETPIYAENQLKKLTLGFKLMQFDYQNVKFFDKIGKAEFIDIIEYYFLTVAKWIAHFDEFRKLDQSLQIKLLQAIWHVWSKIHKCASTAFYRKSNPNAKPTQKILRNVCMDRMHVHKLDTSWMSDYPTEHVTRFMLTHHVYDFKIVESLLKLDPTDVELTFMFAQLCFEYAGKRFQGEILKITDHFQQVLSNDLHHYYITDQRRERYFQRLTDLMKVNNLIQRSIWETRPHRELGRVFEISKLEFSHPEMFDDSGFC.

Positions 5 to 77 (LFPCQICGQN…IGMDASKFQY (73 aa)) form a DNA-binding region, nuclear receptor. The segment at 8 to 28 (CQICGQNSHGTHFGIVSCRAC) adopts an NR C4-type zinc-finger fold. The NR C4-type; atypical zinc-finger motif lies at 41 to 65 (ARKGCLTNFKDKGSCFCKPCRLRKC). The 259-residue stretch at 130–388 (YLDHGCETPI…FSHPEMFDDS (259 aa)) folds into the NR LBD domain.

The protein belongs to the nuclear hormone receptor family.

It is found in the nucleus. Its function is as follows. Orphan nuclear receptor. This chain is Nuclear hormone receptor family member nhr-115 (nhr-115), found in Caenorhabditis elegans.